The sequence spans 445 residues: POU domain, class 3, transcription factor 2 (445 aa).

Disordered regions lie at residues Thr63–Ala173, Leu203–Ser269, Glu336–Thr361, and Glu411–Gln445. The span at Gly68–Gly90 shows a compositional bias: gly residues. Residues Gln125 to Gln151 are compositionally biased toward low complexity. The span at Leu217–His226 shows a compositional bias: basic and acidic residues. The segment covering Ala227–Pro237 has biased composition (basic residues). Over residues Gln239–His253 the composition is skewed to pro residues. Residues Glu264–Asp338 form the POU-specific domain. The residue at position 343 (Ser343) is a Phosphoserine. Residues Lys356–Thr415 constitute a DNA-binding region (homeobox).

The protein belongs to the POU transcription factor family. Class-3 subfamily. As to quaternary structure, interacts with PQBP1. Interaction with ISL1. Expressed specifically at high levels in the brain.

Its subcellular location is the nucleus. Functionally, transcription factor that plays a key role in neuronal differentiation. Binds preferentially to the recognition sequence which consists of two distinct half-sites, ('GCAT') and ('TAAT'), separated by a non-conserved spacer region of 0, 2, or 3 nucleotides. Acts as a transcriptional activator when binding cooperatively with SOX4, SOX11, or SOX12 to gene promoters. The combination of three transcription factors, ASCL1, POU3F2/BRN2 and MYT1L, is sufficient to reprogram fibroblasts and other somatic cells into induced neuronal (iN) cells in vitro. Acts downstream of ASCL1, accessing chromatin that has been opened by ASCL1, and promotes transcription of neuronal genes. The chain is POU domain, class 3, transcription factor 2 (Pou3f2) from Rattus norvegicus (Rat).